Here is a 236-residue protein sequence, read N- to C-terminus: Rab-like protein 3 (236 aa).

Residues 1-236 (MASLDRVKVL…GGTLKSLHYD (236 aa)) form a small GTPase-like region. GTP contacts are provided by residues 16–21 (GVGKSS), 148–150 (KLD), and 179–180 (DC).

It belongs to the small GTPase superfamily. Rab family. As to quaternary structure, homodimer. Interacts with GPR89; the interaction stabilizes GPR89. Interacts with RAP1GDS1.

In terms of biological role, required for KRAS signaling regulation and modulation of cell proliferation. Regulator of KRAS prenylation, and probably prenylation of other small GTPases. Required for lymphocyte development and function. Not required for myeloid cell development. The chain is Rab-like protein 3 (RABL3) from Bos taurus (Bovine).